The chain runs to 122 residues: Prefoldin subunit 1 (122 aa).

Ala2 carries the post-translational modification N-acetylalanine.

The protein belongs to the prefoldin subunit beta family. Heterohexamer of two PFD-alpha type and four PFD-beta type subunits.

Functionally, binds specifically to cytosolic chaperonin (c-CPN) and transfers target proteins to it. Binds to nascent polypeptide chain and promotes folding in an environment in which there are many competing pathways for nonnative proteins. The chain is Prefoldin subunit 1 (PFDN1) from Homo sapiens (Human).